Here is a 231-residue protein sequence, read N- to C-terminus: Sugar fermentation stimulation protein homolog (231 aa).

The protein belongs to the SfsA family.

The chain is Sugar fermentation stimulation protein homolog from Citrifermentans bemidjiense (strain ATCC BAA-1014 / DSM 16622 / JCM 12645 / Bem) (Geobacter bemidjiensis).